The sequence spans 1088 residues: Ran-binding protein 17 (1088 aa).

Position 2 is an N-acetylalanine (alanine 2). The residue at position 569 (serine 569) is a Phosphoserine.

This sequence belongs to the exportin family. Binds to nucleoporins and the GTP-bound form of Ran. In terms of tissue distribution, highly expressed in testis, moderately in pancreas and weakly in other tissues studied.

It is found in the cytoplasm. The protein resides in the nucleus. Its subcellular location is the nuclear pore complex. In terms of biological role, may function as a nuclear transport receptor. The protein is Ran-binding protein 17 (RANBP17) of Homo sapiens (Human).